Here is a 198-residue protein sequence, read N- to C-terminus: Protein RD3-like (198 aa).

Positions 28-57 (KTLLRELKWHLKERERLIQEIENEQKVKKT) form a coiled coil. Positions 133-168 (GSEQEDLEDSGSMDCSAPSVIQGDSSKRADKDEIPT) are disordered. The segment covering 157–166 (SSKRADKDEI) has biased composition (basic and acidic residues).

The sequence is that of Protein RD3-like (RD3L) from Homo sapiens (Human).